The primary structure comprises 158 residues: Biotin carboxyl carrier protein of acetyl-CoA carboxylase (158 aa).

The Biotinyl-binding domain maps to 81-157; it reads YATIVSPMVG…DCGQALMKVE (77 aa). An N6-biotinyllysine modification is found at lysine 123.

It is found in the plastid. It localises to the chloroplast. It functions in the pathway lipid metabolism; fatty acid biosynthesis. Functionally, this protein is a component of the acetyl coenzyme A carboxylase complex; first, biotin carboxylase catalyzes the carboxylation of the carrier protein and then the transcarboxylase transfers the carboxyl group to form malonyl-CoA. The protein is Biotin carboxyl carrier protein of acetyl-CoA carboxylase (accB) of Pyropia yezoensis (Susabi-nori).